The chain runs to 141 residues: Cystatin (141 aa).

The first 26 residues, methionine 1–methionine 26, serve as a signal peptide directing secretion. Residues glycine 29–tryptophan 129 enclose the Cystatin domain. Residues glutamine 73–glycine 77 carry the Secondary area of contact motif. Intrachain disulfides connect cysteine 91–cysteine 107 and cysteine 120–cysteine 140.

This sequence belongs to the cystatin family. As to expression, expressed at a low level by the venom gland (at protein level).

The protein localises to the secreted. Inhibits various C1 cysteine proteases including cathepsin L, papain and cathepsin B. This protein has no toxic activity and its function in the venom is unknown. It may play a role as a housekeeping or regulatory protein. This is Cystatin from Pseudonaja textilis (Eastern brown snake).